We begin with the raw amino-acid sequence, 280 residues long: Succinate dehydrogenase [ubiquinone] iron-sulfur subunit 2, mitochondrial (280 aa).

The transit peptide at 1-28 (MAFGLIGRVVGTKSSRLSTAARLIPARW) directs the protein to the mitochondrion. Residues 51 to 140 (FQIYRWNPDN…ETTITPLPHM (90 aa)) form the 2Fe-2S ferredoxin-type domain. 3 residues coordinate [2Fe-2S] cluster: Cys101, Cys106, and Cys121. In terms of domain architecture, 4Fe-4S ferredoxin-type spans 183-213 (DRAKLDGMYECILCACCSTSCPSYWWNPESY). [4Fe-4S] cluster is bound by residues Cys193, Cys196, and Cys199. Cys203 is a [3Fe-4S] cluster binding site. Trp208 serves as a coordination point for a ubiquinone. [3Fe-4S] cluster contacts are provided by Cys250 and Cys256. Residue Cys260 coordinates [4Fe-4S] cluster.

It belongs to the succinate dehydrogenase/fumarate reductase iron-sulfur protein family. In terms of assembly, component of complex II composed of eight subunits in plants: four classical SDH subunits SDH1, SDH2, SDH3 and SDH4 (a flavoprotein (FP), an iron-sulfur protein (IP), and a cytochrome b composed of a large and a small subunit.), as well as four subunits unknown in mitochondria from bacteria and heterotrophic eukaryotes. Requires [2Fe-2S] cluster as cofactor. [3Fe-4S] cluster serves as cofactor. [4Fe-4S] cluster is required as a cofactor. As to expression, ubiquitous. Preferentially expressed in flowers, inflorescences and root tips.

The protein localises to the mitochondrion inner membrane. It catalyses the reaction a quinone + succinate = fumarate + a quinol. It participates in carbohydrate metabolism; tricarboxylic acid cycle; fumarate from succinate (eukaryal route): step 1/1. Its function is as follows. Iron-sulfur protein (IP) subunit of succinate dehydrogenase (SDH) that is involved in complex II of the mitochondrial electron transport chain and is responsible for transferring electrons from succinate to ubiquinone (coenzyme Q). This is Succinate dehydrogenase [ubiquinone] iron-sulfur subunit 2, mitochondrial (SDH2-2) from Arabidopsis thaliana (Mouse-ear cress).